A 66-amino-acid polypeptide reads, in one-letter code: Phylloseptin-S4 (66 aa).

The signal sequence occupies residues 1–22 (MAFLKKSLFLVLFLGLVSLSIC). Residues 23–46 (EEEKRETEEEEHDQEEDDKSEEKR) constitute a propeptide that is removed on maturation. A disordered region spans residues 25-44 (EKRETEEEEHDQEEDDKSEE). The segment covering 30-41 (EEEEHDQEEDDK) has biased composition (acidic residues). Leucine 65 is subject to Leucine amide.

Expressed by the skin glands.

It is found in the secreted. The protein localises to the target cell membrane. Antimicrobial peptide with high activity against Gram-positive bacteria, moderate activity against Gram-negative bacteria, and moderate activity against fungi. Acts by causing bacterial membrane disruption inducing leakage of the intracellular content followed by cell death. It adopts an alpha-helical amphipathic structure in membrane environments. Also shows highly potent antiparasitic activity against Leishmania species. Shows moderate hemolytic activity on human erythrocytes (LC(50)=33 uM). Is also active on human monocytes (IC(50)=23 uM). The chain is Phylloseptin-S4 from Phyllomedusa sauvagei (Sauvage's leaf frog).